The sequence spans 1208 residues: ATP-dependent DNA helicase Q4 (1208 aa).

Disordered stretches follow at residues 17 to 180 and 201 to 333; these read AFRR…ASLS and FLGA…AGKA. At Ser27 the chain carries Phosphoserine. Residues 36–47 are compositionally biased toward basic and acidic residues; sequence EETRALYREYRT. Over residues 61 to 70 the composition is skewed to low complexity; that stretch reads SSESLPAAAE. Residues 86 to 100 are compositionally biased toward polar residues; it reads ATKSPQSTPGRSRQG. A phosphoserine mark is found at Ser178 and Ser180. A compositionally biased stretch (polar residues) spans 273 to 283; the sequence is AQVQQESSQAG. A Helicase ATP-binding domain is found at 489-662; sequence VMRILSGIST…AQHLAVAEEP (174 aa). Position 502–509 (502–509) interacts with ATP; that stretch reads LPTGAGKS. The DEAH box signature appears at 605–608; sequence DEAH. Residues 683-850 enclose the Helicase C-terminal domain; sequence DTDQALLTLL…AVKRLVQRVF (168 aa). Cys853 and Cys855 together coordinate Zn(2+). The disordered stretch occupies residues 860–888; it reads PPSEQEGAVGGERPVPKYPPQEAEQLSHQ. 2 residues coordinate Zn(2+): Cys897 and His900. The interval 1111–1130 is disordered; the sequence is EEGQEPGGMEDAQGPEPGQA. Residues 1117-1208 form an increases helicase activity about 5-fold (in a fragment starting at residue 427) region; it reads GGMEDAQGPE…ATEELLQVAR (92 aa).

Belongs to the helicase family. RecQ subfamily. As to quaternary structure, interacts with UBR1 and UBR2. Interacts with MCM10; this interaction regulates RECQL4 unwinding activity. Interacts (via residues 1-54) with TOPBP1. Zn(2+) serves as cofactor. Ubiquitously expressed, with highest levels in thymus and testis.

The protein resides in the cytoplasm. Its subcellular location is the nucleus. The enzyme catalyses Couples ATP hydrolysis with the unwinding of duplex DNA by translocating in the 3'-5' direction.. It catalyses the reaction ATP + H2O = ADP + phosphate + H(+). Its function is as follows. An ATP-dependent DNA helicase which unwinds dsDNA with a 3'-overhang in a 3'-5' direction. Does not unwind more than 18 bp of dsDNA. May modulate chromosome segregation. The N-terminal domain (residues 1-54) binds DNA Y-shaped DNA better than ss- or dsDNA. The core helicase domain binds ssDNA. In Homo sapiens (Human), this protein is ATP-dependent DNA helicase Q4 (RECQL4).